We begin with the raw amino-acid sequence, 261 residues long: SLA class II histocompatibility antigen, DQ haplotype C beta chain (261 aa).

The N-terminal stretch at 1 to 31 (MSGMVALRLPRGLWTAALTVMLVVLGAPVAE) is a signal peptide. The tract at residues 32–126 (GRDSPQDFVF…IEEGTTLQRR (95 aa)) is beta-1. The Extracellular segment spans residues 32 to 230 (GRDSPQDFVF…RAQSESAQSK (199 aa)). 2 disulfides stabilise this stretch: Cys47-Cys111 and Cys149-Cys205. N-linked (GlcNAc...) asparagine glycosylation occurs at Asn51. Positions 127-220 (VQPTVTISPS…SLQNPILVEW (94 aa)) are beta-2. The region spanning 129 to 233 (PTVTISPSKA…SESAQSKMLS (105 aa)) is the Ig-like C1-type domain. Residues 221–230 (RAQSESAQSK) form a connecting peptide region. Residues 231-251 (MLSGVGGFVLGLIFLGLGLFI) form a helical membrane-spanning segment. The Cytoplasmic portion of the chain corresponds to 252-261 (RHRSQKGLVR).

Belongs to the MHC class II family.

It is found in the membrane. This chain is SLA class II histocompatibility antigen, DQ haplotype C beta chain, found in Sus scrofa (Pig).